Reading from the N-terminus, the 160-residue chain is Cytochrome b6-f complex subunit 4 (160 aa).

The next 3 helical transmembrane spans lie at 36-56, 95-115, and 131-151; these read LLYI…GLAV, LLGI…PFIE, and AVFL…TLPI.

This sequence belongs to the cytochrome b family. PetD subfamily. As to quaternary structure, the 4 large subunits of the cytochrome b6-f complex are cytochrome b6, subunit IV (17 kDa polypeptide, PetD), cytochrome f and the Rieske protein, while the 4 small subunits are PetG, PetL, PetM and PetN. The complex functions as a dimer.

The protein localises to the cellular thylakoid membrane. Its function is as follows. Component of the cytochrome b6-f complex, which mediates electron transfer between photosystem II (PSII) and photosystem I (PSI), cyclic electron flow around PSI, and state transitions. This is Cytochrome b6-f complex subunit 4 from Trichodesmium erythraeum (strain IMS101).